A 347-amino-acid polypeptide reads, in one-letter code: E3 ubiquitin-protein ligase ARK2C (347 aa).

2 disordered regions span residues 23–79 and 268–289; these read PFQR…GTLH and PHKY…GEES. Residues 267–269 form a ubiquitin binding region; it reads FPH. Positions 276-285 are enriched in basic and acidic residues; the sequence is PQDSKGKKDE. Cys295 and Cys298 together coordinate Zn(2+). An RING-type; atypical zinc finger spans residues 295–336; the sequence is CTICLSMLEDGEDVRRLPCMHLFHQLCVDQWLAMSKKCPICR. Residues 310–314 form a ubiquitin binding region; the sequence is RLPCM. 2 residues coordinate Zn(2+): His318 and Cys321.

The protein belongs to the Arkadia family. In terms of assembly, monomer; binding to the ubiquitin-conjugating enzyme E2 does not trigger homodimerization. Expressed in neurons of the nervous system.

It is found in the nucleus. It carries out the reaction S-ubiquitinyl-[E2 ubiquitin-conjugating enzyme]-L-cysteine + [acceptor protein]-L-lysine = [E2 ubiquitin-conjugating enzyme]-L-cysteine + N(6)-ubiquitinyl-[acceptor protein]-L-lysine.. Its activity is regulated as follows. Binds free ubiquitin non-covalently via its RING-type zinc finger. Ubiquitin-binding leads to enhance the E3 ubiquitin-protein ligase activity by stabilizing the ubiquitin-conjugating enzyme E2 (donor ubiquitin) in the 'closed' conformation and activating ubiquitin transfer. Its function is as follows. E3 ubiquitin-protein ligase that acts as a regulator of motor axon elongation. Required for efficient motor axon extension in the dorsal forelimb by enhancing the transcriptional responses of the SMAD1/SMAD5/SMAD8 effectors, which are activated downstream of BMP. Acts by mediating ubiquitination and degradation of SMAD inhibitors such as SMAD6, SMAD7, SKI and SNON isoform of SKIL. The protein is E3 ubiquitin-protein ligase ARK2C of Mus musculus (Mouse).